The sequence spans 381 residues: Creatine kinase M-type (381 aa).

The region spanning lysine 11–glycine 98 is the Phosphagen kinase N-terminal domain. Positions tyrosine 125–leucine 367 constitute a Phosphagen kinase C-terminal domain. Residues serine 128–arginine 132, histidine 191, arginine 236, arginine 292, arginine 320–valine 325, and aspartate 335 each bind ATP.

The protein belongs to the ATP:guanido phosphotransferase family. As to quaternary structure, dimer of identical or non-identical chains. With MM being the major form in skeletal muscle and myocardium, MB existing in myocardium, and BB existing in many tissues, especially brain.

Its subcellular location is the cytoplasm. It carries out the reaction creatine + ATP = N-phosphocreatine + ADP + H(+). Reversibly catalyzes the transfer of phosphate between ATP and various phosphogens (e.g. creatine phosphate). Creatine kinase isoenzymes play a central role in energy transduction in tissues with large, fluctuating energy demands, such as skeletal muscle, heart, brain and spermatozoa. The protein is Creatine kinase M-type of Tetronarce californica (Pacific electric ray).